Here is a 431-residue protein sequence, read N- to C-terminus: Nuclear envelope integral membrane protein 1 (431 aa).

An N-terminal signal peptide occupies residues 1 to 29; it reads MAGEVEGEGCRVSWGVLVALLLLPLPSLC. 5 helical membrane-spanning segments follow: residues 151-171, 175-195, 206-226, 236-256, and 266-286; these read PRLF…DTLS, IFYY…ILVF, PFVA…QLVF, YWQY…AFCY, and SINI…YISV. The a; required for its colocalization with lamins at the nuclear envelope stretch occupies residues 176–287; it reads FYYSTGITVG…GLLLMYISVQ (112 aa). The Nuclear localization signal motif lies at 317 to 325; that stretch reads RKIKLKRGK. Residues 326-395 form a b; required for interaction with ran region; it reads PSPPRLLTEE…LTPNEVSVHE (70 aa). The segment at 326 to 431 is interaction with banf1-a and banf1-b; it reads PSPPRLLTEE…IEPVLYQDLR (106 aa). A BAF-binding site (BBS); essential for interaction with banf1-a, banf1-b and ran region spans residues 368–375; sequence SRIQSPKR.

It belongs to the NEMP family. As to quaternary structure, homooligomer. Interacts with banf1-a and banf1-b. Interacts with ran-gtp. Phosphorylated.

Its subcellular location is the nucleus inner membrane. The protein localises to the nucleus envelope. Functionally, in concert with ran, required for proper eye development. May be involved in the expression of early eye marker genes. Contributes to nuclear envelope stiffness in germ cells. Required for fertility. Essential for normal erythropoiesis. Required for efficient nuclear envelope opening and enucleation during the late stages of erythroblast maturation. The polypeptide is Nuclear envelope integral membrane protein 1 (nemp1) (Xenopus tropicalis (Western clawed frog)).